Consider the following 768-residue polypeptide: Polyadenylate-binding protein, cytoplasmic and nuclear (768 aa).

Polar residues predominate over residues 1–11 (MSAETATNPPV). The segment at 1–52 (MSAETATNPPVDTTPGAAPESATNGSNANVAADTTAGEASQTTSSTTPTAQP) is disordered. Residues 39-52 (ASQTTSSTTPTAQP) are compositionally biased toward low complexity. 4 consecutive RRM domains span residues 55–133 (ASLY…WSQR), 143–220 (GNVF…HHIA), 236–314 (TNVY…RAQK), and 340–470 (VNLY…LAQR). Disordered stretches follow at residues 374-428 (DFAP…EKKP), 633-662 (QQGM…NASP), and 739-768 (KNKG…ETKS). Residues 637-646 (GRPGQAGRGQ) show a composition bias toward gly residues. The region spanning 662–739 (PNGLTLQVLN…ALTVYDEYVK (78 aa)) is the PABC domain. Residues 753 to 768 (NKSKDASQETAEETKS) are compositionally biased toward basic and acidic residues.

Belongs to the polyadenylate-binding protein type-1 family.

The protein localises to the cytoplasm. It localises to the nucleus. Its function is as follows. Binds the poly(A) tail of mRNA. Appears to be an important mediator of the multiple roles of the poly(A) tail in mRNA biogenesis, stability and translation. In the nucleus, involved in both mRNA cleavage and polyadenylation. Is also required for efficient mRNA export to the cytoplasm. Acts in concert with a poly(A)-specific nuclease (PAN) to affect poly(A) tail shortening, which may occur concomitantly with either nucleocytoplasmic mRNA transport or translational initiation. In the cytoplasm, stimulates translation initiation and regulates mRNA decay through translation termination-coupled poly(A) shortening, probably mediated by PAN. In Coccidioides immitis (strain RS) (Valley fever fungus), this protein is Polyadenylate-binding protein, cytoplasmic and nuclear (PAB1).